The chain runs to 34 residues: Photosystem II reaction center protein M (34 aa).

Residues 5–25 (ILGLTATALFIIIPTSFLLIL) traverse the membrane as a helical segment.

This sequence belongs to the PsbM family. In terms of assembly, PSII is composed of 1 copy each of membrane proteins PsbA, PsbB, PsbC, PsbD, PsbE, PsbF, PsbH, PsbI, PsbJ, PsbK, PsbL, PsbM, PsbT, PsbX, PsbY, PsbZ, Psb30/Ycf12, at least 3 peripheral proteins of the oxygen-evolving complex and a large number of cofactors. It forms dimeric complexes.

The protein resides in the plastid. The protein localises to the chloroplast thylakoid membrane. One of the components of the core complex of photosystem II (PSII). PSII is a light-driven water:plastoquinone oxidoreductase that uses light energy to abstract electrons from H(2)O, generating O(2) and a proton gradient subsequently used for ATP formation. It consists of a core antenna complex that captures photons, and an electron transfer chain that converts photonic excitation into a charge separation. This subunit is found at the monomer-monomer interface. The sequence is that of Photosystem II reaction center protein M from Stigeoclonium helveticum (Green alga).